Reading from the N-terminus, the 107-residue chain is Endonuclease ALBA3 (107 aa).

K23 and K32 each carry N6-acetyllysine.

This sequence belongs to the histone-like Alba family. In terms of assembly, homodimer. Interacts (acetylated and unacetylated) with Sir2A. The cofactor is a divalent metal cation. Post-translationally, acetylated. Exists in both acetylated and unacetylated forms but predominantly in an acetylated form. Deacetylated by Sir2A.

Its subcellular location is the nucleus. The protein resides in the chromosome. It is found in the telomere. It localises to the cytoplasm. With respect to regulation, mild acetylation lowers protein interaction with DNA and high acetylation abolishes DNA-binding activity. DNA binding and endonuclease activity is modulated via deacetylation of Lys-23 by Sir2A. Inhibited in the presence of EDTA and EGTA. In terms of biological role, possesses DNA-binding and endonuclease activities. Binds DNA cooperatively in sequence-independent manner at the DNA minor groove. Exhibits apurinic/apyrimidinic site-driven endonuclease activity. Binds RNA; shows high affinity for poly(A) and a lower affinity for poly(U) templates. In vitro, prevents transcription after DNA binding. Associates with the telomeric region, the subtelomeric TARE6 repeat sequence and the var gene promoters. This chain is Endonuclease ALBA3, found in Plasmodium falciparum (isolate 3D7).